Reading from the N-terminus, the 979-residue chain is Translation initiation factor IF-2 (979 aa).

Positions 68-386 are disordered; that stretch reads VKQKQGTPAS…DKRDAASRAA (319 aa). Basic and acidic residues-rich tracts occupy residues 102–179, 217–229, and 260–273; these read QDMR…KPEE, EMEK…EVFR, and TKED…DADG. Over residues 317 to 326 the composition is skewed to polar residues; that stretch reads RPAQQQSNAS. Basic and acidic residues predominate over residues 347 to 356; it reads DVQRQVKETL. The 169-residue stretch at 478–646 folds into the tr-type G domain; sequence ARPPIVTVMG…KVLLEADILE (169 aa). Residues 487-494 form a G1 region; sequence GHVDHGKT. 487–494 contributes to the GTP binding site; the sequence is GHVDHGKT. The tract at residues 512-516 is G2; that stretch reads GITQH. The tract at residues 534–537 is G3; it reads DTPG. Residues 534–538 and 588–591 each bind GTP; these read DTPGH and NKID. The tract at residues 588–591 is G4; that stretch reads NKID. The segment at 624 to 626 is G5; it reads SAK.

Belongs to the TRAFAC class translation factor GTPase superfamily. Classic translation factor GTPase family. IF-2 subfamily.

It is found in the cytoplasm. One of the essential components for the initiation of protein synthesis. Protects formylmethionyl-tRNA from spontaneous hydrolysis and promotes its binding to the 30S ribosomal subunits. Also involved in the hydrolysis of GTP during the formation of the 70S ribosomal complex. The chain is Translation initiation factor IF-2 from Porphyromonas gingivalis (strain ATCC BAA-308 / W83).